The following is a 731-amino-acid chain: 1,4-alpha-glucan branching enzyme GlgB (731 aa).

Asp412 (nucleophile) is an active-site residue. Glu465 (proton donor) is an active-site residue.

This sequence belongs to the glycosyl hydrolase 13 family. GlgB subfamily. Monomer.

The catalysed reaction is Transfers a segment of a (1-&gt;4)-alpha-D-glucan chain to a primary hydroxy group in a similar glucan chain.. It participates in glycan biosynthesis; glycogen biosynthesis. In terms of biological role, catalyzes the formation of the alpha-1,6-glucosidic linkages in glycogen by scission of a 1,4-alpha-linked oligosaccharide from growing alpha-1,4-glucan chains and the subsequent attachment of the oligosaccharide to the alpha-1,6 position. The chain is 1,4-alpha-glucan branching enzyme GlgB from Bordetella bronchiseptica (strain ATCC BAA-588 / NCTC 13252 / RB50) (Alcaligenes bronchisepticus).